A 564-amino-acid chain; its full sequence is Dihydroxy-acid dehydratase 2 (564 aa).

Residue Cys59 participates in [2Fe-2S] cluster binding. Residue Asp91 participates in Mg(2+) binding. Cys132 is a binding site for [2Fe-2S] cluster. Positions 133 and 134 each coordinate Mg(2+). N6-carboxylysine is present on Lys134. Cys204 is a [2Fe-2S] cluster binding site. Position 454 (Glu454) interacts with Mg(2+). The active-site Proton acceptor is Ser480.

This sequence belongs to the IlvD/Edd family. Homodimer. Requires [2Fe-2S] cluster as cofactor. Mg(2+) serves as cofactor.

It catalyses the reaction (2R)-2,3-dihydroxy-3-methylbutanoate = 3-methyl-2-oxobutanoate + H2O. It carries out the reaction (2R,3R)-2,3-dihydroxy-3-methylpentanoate = (S)-3-methyl-2-oxopentanoate + H2O. It participates in amino-acid biosynthesis; L-isoleucine biosynthesis; L-isoleucine from 2-oxobutanoate: step 3/4. It functions in the pathway amino-acid biosynthesis; L-valine biosynthesis; L-valine from pyruvate: step 3/4. Functionally, functions in the biosynthesis of branched-chain amino acids. Catalyzes the dehydration of (2R,3R)-2,3-dihydroxy-3-methylpentanoate (2,3-dihydroxy-3-methylvalerate) into 2-oxo-3-methylpentanoate (2-oxo-3-methylvalerate) and of (2R)-2,3-dihydroxy-3-methylbutanoate (2,3-dihydroxyisovalerate) into 2-oxo-3-methylbutanoate (2-oxoisovalerate), the penultimate precursor to L-isoleucine and L-valine, respectively. In Staphylococcus saprophyticus subsp. saprophyticus (strain ATCC 15305 / DSM 20229 / NCIMB 8711 / NCTC 7292 / S-41), this protein is Dihydroxy-acid dehydratase 2.